Reading from the N-terminus, the 371-residue chain is Probable endolytic peptidoglycan transglycosylase RlpA (371 aa).

An N-terminal signal peptide occupies residues 1–25 (MNQRHLWTIVALSVTVLGTPAVGRT). Positions 177–191 (LVASQSQNKSSSSQQ) are enriched in low complexity. The disordered stretch occupies residues 177-196 (LVASQSQNKSSSSQQKSERY).

The protein belongs to the RlpA family.

In terms of biological role, lytic transglycosylase with a strong preference for naked glycan strands that lack stem peptides. The polypeptide is Probable endolytic peptidoglycan transglycosylase RlpA (Nostoc sp. (strain PCC 7120 / SAG 25.82 / UTEX 2576)).